Here is a 414-residue protein sequence, read N- to C-terminus: Nucleoredoxin (414 aa).

Residues 131-305 (LLVKDDPEGL…ELNAVQLNEG (175 aa)) form the Thioredoxin domain.

The protein belongs to the nucleoredoxin family.

It is found in the cytoplasm. It localises to the cytosol. The protein localises to the nucleus. The enzyme catalyses [protein]-dithiol + NAD(+) = [protein]-disulfide + NADH + H(+). It catalyses the reaction [protein]-dithiol + NADP(+) = [protein]-disulfide + NADPH + H(+). In terms of biological role, functions as a redox-dependent negative regulator of the Wnt signaling pathway. The polypeptide is Nucleoredoxin (nxn) (Xenopus laevis (African clawed frog)).